A 294-amino-acid chain; its full sequence is tRNA dimethylallyltransferase (294 aa).

10 to 17 (GPTAVGKT) provides a ligand contact to ATP. Position 12 to 17 (12 to 17 (TAVGKT)) interacts with substrate. Residues 35–38 (DSQQ) are interaction with substrate tRNA.

It belongs to the IPP transferase family. Monomer. Mg(2+) is required as a cofactor.

It carries out the reaction adenosine(37) in tRNA + dimethylallyl diphosphate = N(6)-dimethylallyladenosine(37) in tRNA + diphosphate. Catalyzes the transfer of a dimethylallyl group onto the adenine at position 37 in tRNAs that read codons beginning with uridine, leading to the formation of N6-(dimethylallyl)adenosine (i(6)A). This chain is tRNA dimethylallyltransferase, found in Streptococcus pneumoniae (strain P1031).